Consider the following 324-residue polypeptide: N-acetyl-gamma-glutamyl-phosphate reductase (324 aa).

C131 is an active-site residue.

The protein belongs to the NAGSA dehydrogenase family. Type 1 subfamily.

It is found in the cytoplasm. The catalysed reaction is N-acetyl-L-glutamate 5-semialdehyde + phosphate + NADP(+) = N-acetyl-L-glutamyl 5-phosphate + NADPH + H(+). The protein operates within amino-acid biosynthesis; L-arginine biosynthesis; N(2)-acetyl-L-ornithine from L-glutamate: step 3/4. Functionally, catalyzes the NADPH-dependent reduction of N-acetyl-5-glutamyl phosphate to yield N-acetyl-L-glutamate 5-semialdehyde. The protein is N-acetyl-gamma-glutamyl-phosphate reductase of Bradyrhizobium sp. (strain ORS 278).